A 551-amino-acid chain; its full sequence is uncharacterized protein (551 aa).

At 1-7 (MKKNSSV) the chain is on the cytoplasmic side. A helical membrane pass occupies residues 8–28 (VFFLVGLSQFVTMAFLIIGSI). Residues 29 to 88 (TAPIFKQIGYSKYDEITYGTFGYCKEGSCSKASYNYHPDELSDSDSNWKLNSNARSILGK) lie on the Vacuolar side of the membrane. A helical transmembrane segment spans residues 89 to 109 (IIFITPIAAGLNFLGFLCTIM). Over 110-135 (SVLLINVLSSDRVGSASAIMFFVNLT) the chain is Cytoplasmic. A helical membrane pass occupies residues 136–156 (FSTLGFLSASLICIVVFLLFY). Over 157 to 160 (PHVT) the chain is Vacuolar. Residues 161-181 (WCSWVLIPGAALSLLVIPLIF) traverse the membrane as a helical segment. The Cytoplasmic segment spans residues 182 to 551 (SAYSRSSGSR…TSLNNPYGFR (370 aa)). Residues serine 224 and serine 232 each carry the phosphoserine modification. Residues 280–341 (AKDMENSNGS…NGSNTSNNIN (62 aa)) are disordered. The span at 307-320 (TSTYSVIESESGLK) shows a compositional bias: polar residues. The segment covering 321–341 (NGSVSNNYVRNNGSNTSNNIN) has biased composition (low complexity). The residue at position 363 (serine 363) is a Phosphoserine.

Forms homo dimers or homooligomers in MCC microdomains. Interacts with BOI2 and RHO3, two key regulators of secretion.

It localises to the vacuole membrane. The protein resides in the cell membrane. Functionally, protein involved in secretion and cell wall organization. Contributes to cell surface-related functions as a auxiliary component of MCC/eisosome that specifically interacts with the secretory pathway. This is an uncharacterized protein from Saccharomyces cerevisiae (strain ATCC 204508 / S288c) (Baker's yeast).